Consider the following 208-residue polypeptide: EF-hand protein 5 variant 1 (208 aa).

The disordered stretch occupies residues 1–34 (MQARGTVKVQGDAKVDGKMSTGQHSHHQHLNSTQ). 4 EF-hand domains span residues 64-98 (MAEG…HLTE), 99-134 (EEFH…EVDD), 135-170 (TMAD…LGER), and 171-206 (STPE…SRVN). Residues Glu118, Asp123, Asp148, Thr152, and Tyr154 each coordinate Ca(2+).

The protein is EF-hand protein 5 variant 1 of Trypanosoma cruzi.